Here is a 303-residue protein sequence, read N- to C-terminus: Glycine--tRNA ligase alpha subunit (303 aa).

This sequence belongs to the class-II aminoacyl-tRNA synthetase family. Tetramer of two alpha and two beta subunits.

The protein resides in the cytoplasm. It catalyses the reaction tRNA(Gly) + glycine + ATP = glycyl-tRNA(Gly) + AMP + diphosphate. This is Glycine--tRNA ligase alpha subunit from Streptococcus equi subsp. equi (strain 4047).